The chain runs to 300 residues: uncharacterized protein (300 aa).

A run of 10 helical transmembrane segments spans residues 4–24, 31–51, 68–88, 95–115, 120–140, 146–166, 177–197, 214–234, 242–262, and 272–292; these read IIIIMLFFLVSITWGTTWIAM, IPPFFATGIRFLAASPLLIIL, FQIFISIFYFSIPFTLMLYGG, ISSIIFANMPVLVLIISHFYL, NFIQKVGMVIALITLFFVLLI, CFFQWKGILALLLALLSHAVI, VSVITFNALPSLISGIFLSII, ILAVFYLGNFCGICGILSYFY, FYASIVFLIFPLIAGFLEIYI, and LWFIIPSGLGILLTLIPINFF. EamA domains follow at residues 15–139 and 161–287; these read ITWG…FVLL and LSHA…LTLI.

Belongs to the EamA transporter family.

Its subcellular location is the cell membrane. This is an uncharacterized protein from Buchnera aphidicola subsp. Schizaphis graminum (strain Sg).